The chain runs to 455 residues: tRNA-2-methylthio-N(6)-dimethylallyladenosine synthase (455 aa).

One can recognise an MTTase N-terminal domain in the interval 3-117 (KGLYIESYGC…LPELIMKATR (115 aa)). The [4Fe-4S] cluster site is built by cysteine 12, cysteine 48, cysteine 80, cysteine 155, cysteine 159, and cysteine 162. The region spanning 141-375 (VSRGVSAFVS…LLTQQRLFTK (235 aa)) is the Radical SAM core domain.

This sequence belongs to the methylthiotransferase family. MiaB subfamily. As to quaternary structure, monomer. The cofactor is [4Fe-4S] cluster.

It localises to the cytoplasm. It catalyses the reaction N(6)-dimethylallyladenosine(37) in tRNA + (sulfur carrier)-SH + AH2 + 2 S-adenosyl-L-methionine = 2-methylsulfanyl-N(6)-dimethylallyladenosine(37) in tRNA + (sulfur carrier)-H + 5'-deoxyadenosine + L-methionine + A + S-adenosyl-L-homocysteine + 2 H(+). Catalyzes the methylthiolation of N6-(dimethylallyl)adenosine (i(6)A), leading to the formation of 2-methylthio-N6-(dimethylallyl)adenosine (ms(2)i(6)A) at position 37 in tRNAs that read codons beginning with uridine. The sequence is that of tRNA-2-methylthio-N(6)-dimethylallyladenosine synthase from Anaplasma marginale (strain St. Maries).